Here is a 219-residue protein sequence, read N- to C-terminus: Orotate phosphoribosyltransferase (219 aa).

K26 lines the 5-phospho-alpha-D-ribose 1-diphosphate pocket. Residue 34 to 35 (FF) participates in orotate binding. Residues 72 to 73 (YK), R98, K99, K102, H104, and 124 to 132 (DDVITAGTA) contribute to the 5-phospho-alpha-D-ribose 1-diphosphate site. 2 residues coordinate orotate: T128 and R156.

The protein belongs to the purine/pyrimidine phosphoribosyltransferase family. PyrE subfamily. As to quaternary structure, homodimer. Mg(2+) serves as cofactor.

It carries out the reaction orotidine 5'-phosphate + diphosphate = orotate + 5-phospho-alpha-D-ribose 1-diphosphate. It functions in the pathway pyrimidine metabolism; UMP biosynthesis via de novo pathway; UMP from orotate: step 1/2. Catalyzes the transfer of a ribosyl phosphate group from 5-phosphoribose 1-diphosphate to orotate, leading to the formation of orotidine monophosphate (OMP). The chain is Orotate phosphoribosyltransferase from Xylella fastidiosa (strain M23).